A 365-amino-acid chain; its full sequence is Glial fibrillary acidic protein (365 aa).

Residues Arg-1–Arg-5 are head. An IF rod domain is found at Glu-2–Ile-310. Residues Val-6–Leu-37 are coil 1A. The linker 1 stretch occupies residues Arg-38–Ile-48. A coil 1B region spans residues Tyr-49 to Gln-147. The linker 12 stretch occupies residues Leu-148–Asp-163. Positions Leu-164 to Glu-185 are coil 2A. The interval Thr-186–Trp-189 is linker 2. The tract at residues Tyr-190–Ile-310 is coil 2B. The interval Thr-311–Pro-365 is tail.

The protein belongs to the intermediate filament family.

The protein is Glial fibrillary acidic protein (gfap) of Carassius auratus (Goldfish).